The sequence spans 256 residues: 2-C-methyl-D-erythritol 4-phosphate cytidylyltransferase (256 aa).

Belongs to the IspD/TarI cytidylyltransferase family. IspD subfamily.

The catalysed reaction is 2-C-methyl-D-erythritol 4-phosphate + CTP + H(+) = 4-CDP-2-C-methyl-D-erythritol + diphosphate. The protein operates within isoprenoid biosynthesis; isopentenyl diphosphate biosynthesis via DXP pathway; isopentenyl diphosphate from 1-deoxy-D-xylulose 5-phosphate: step 2/6. Catalyzes the formation of 4-diphosphocytidyl-2-C-methyl-D-erythritol from CTP and 2-C-methyl-D-erythritol 4-phosphate (MEP). This Corynebacterium glutamicum (strain R) protein is 2-C-methyl-D-erythritol 4-phosphate cytidylyltransferase.